The chain runs to 588 residues: Adenine deaminase (588 aa).

This sequence belongs to the metallo-dependent hydrolases superfamily. Adenine deaminase family. Homodimer. The cofactor is Mn(2+).

The catalysed reaction is adenine + H2O + H(+) = hypoxanthine + NH4(+). The chain is Adenine deaminase from Shigella flexneri.